Reading from the N-terminus, the 351-residue chain is MAFFITSSPHAHSKKSTQTMMKMVALATIPGLLAQTYFFGWGTLLQVLLAIITAILAEAFVLKCRKRPLAPYLKDNSALLTGLLLALAIPPLSPWWLTVIGVFFAIVIAKHLYGGLGQNLFNPAMAAYVVLLISFPVQMTTWLPAKELLVEHISFMDSVWLIFHGLSQDGFSVHQLTMNVDGMTMATPLDTVKTGLKAGLTTNEILSAPIFNGFAGLGWLWVNVGFLLGGLFLLQQRLIHWHIPVSFLASLFIVSSLFAVFSPDTTTSPIFNLFSGATMLGAFFIATDPVSAATTNKGRLYYGALIGLLVYMIRSWGGFPDGVAFAVLLANMCVPLIDYYTKPRTYGHKKG.

A run of 3 helical transmembrane segments spans residues 37–57, 88–108, and 123–143; these read YFFG…AILA, AIPP…AIVI, and PAMA…TTWL. Thr-187 carries the post-translational modification FMN phosphoryl threonine. 4 helical membrane-spanning segments follow: residues 214–234, 241–261, 270–290, and 300–317; these read FAGL…LFLL, WHIP…FAVF, IFNL…TDPV, and LYYG…RSWG.

This sequence belongs to the NqrB/RnfD family. The complex is composed of six subunits: RnfA, RnfB, RnfC, RnfD, RnfE and RnfG. Requires FMN as cofactor.

The protein resides in the cell inner membrane. Functionally, part of a membrane-bound complex that couples electron transfer with translocation of ions across the membrane. The polypeptide is Ion-translocating oxidoreductase complex subunit D (Aliivibrio salmonicida (strain LFI1238) (Vibrio salmonicida (strain LFI1238))).